The sequence spans 368 residues: Nuclease EXOG, mitochondrial (368 aa).

A mitochondrion-targeting transit peptide spans 1 to 41 (MAIKSIASRLRGSRRFLSGFVAGAVVGAAGAGLAALQFFRS). His-140 acts as the Proton acceptor in catalysis. Asn-171 provides a ligand contact to a divalent metal cation.

The protein belongs to the DNA/RNA non-specific endonuclease family. As to quaternary structure, homodimer. A divalent metal cation is required as a cofactor. In terms of tissue distribution, ubiquitous.

It localises to the mitochondrion inner membrane. Its function is as follows. Endo/exonuclease with nicking activity towards supercoiled DNA, a preference for single-stranded DNA and 5'-3' exonuclease activity. The protein is Nuclease EXOG, mitochondrial (EXOG) of Homo sapiens (Human).